The primary structure comprises 254 residues: Autophagy-related protein 5 (254 aa).

A Glycyl lysine isopeptide (Lys-Gly) (interchain with G-Cter in ATG12) cross-link involves residue lysine 102.

It belongs to the ATG5 family. In terms of assembly, conjugated with ATG12. The ATG5-ATG12 conjugate forms a complex with several units of ATG16. The ATG12-ATG5 conjugate also associates with ATG3. In terms of processing, conjugated to ATG12; which is essential for autophagy. Conjugation with ATG12 involves ATG7 as an E1-like activating enzyme and ATG10 as an E2-like conjugating enzyme.

The protein resides in the preautophagosomal structure membrane. In terms of biological role, involved in cytoplasm to vacuole transport (Cvt) and autophagic vesicle formation. Autophagy is essential for maintenance of amino acid levels and protein synthesis under nitrogen starvation. Required for selective autophagic degradation of the nucleus (nucleophagy). Also required for mitophagy, which eliminates defective or superfluous mitochondria in order to fulfill cellular energy requirements and prevent excess ROS production. Conjugation with ATG12, through a ubiquitin-like conjugating system involving ATG7 as an E1-like activating enzyme and ATG10 as an E2-like conjugating enzyme, is essential for its function. The ATG12-ATG5 conjugate acts as an E3-like enzyme which is required for lipidation of ATG8 and ATG8 association to the vesicle membranes. ATG12-ATG5 rearranges the ATG3 catalytic center and enhances its E2 activity. Autophagy is required for proper vegetative growth, asexual/sexual reproduction, and full virulence. Autophagy is particularly involved in the biosynthesis of deoxynivalenol (DON), an important virulence determinant. In Gibberella zeae (strain ATCC MYA-4620 / CBS 123657 / FGSC 9075 / NRRL 31084 / PH-1) (Wheat head blight fungus), this protein is Autophagy-related protein 5.